A 202-amino-acid chain; its full sequence is Matrix protein (202 aa).

Positions 35–38 match the PPXY motif motif; sequence PPEY. The segment at 115–151 is essential for glycoprotein binding; sequence KIRRTLVFQWAESSGPLDGEELEYSQEITWDDDSEFV.

This sequence belongs to the lyssavirus matrix protein family. Homomultimer. Interacts with nucleoprotein and with the cytoplasmic domain of glycoprotein.

It localises to the virion membrane. Its subcellular location is the host endomembrane system. Functionally, plays a major role in assembly and budding of virion. Completely covers the ribonucleoprotein coil and keep it in condensed bullet-shaped form. Inhibits viral transcription and stimulates replication. Plays a major role in early induction of TRAIL-mediated apoptosis in infected neurons. This chain is Matrix protein (M), found in Irkut virus (IRKV).